A 27-amino-acid chain; its full sequence is Small ribosomal subunit protein bTHX (27 aa).

The span at 1 to 13 (MGKGDRRTRRGKI) shows a compositional bias: basic residues. The tract at residues 1–27 (MGKGDRRTRRGKIWRGTYGKYRPRKKK) is disordered.

This sequence belongs to the bacterial ribosomal protein bTHX family. Part of the 30S ribosomal subunit.

In terms of biological role, binds at the top of the head of the 30S subunit. It stabilizes a number of different RNA elements and thus is important for subunit structure. The chain is Small ribosomal subunit protein bTHX (rpsU) from Thermus aquaticus.